Here is a 306-residue protein sequence, read N- to C-terminus: MPLLTPTSVVLGVLLSQFLNGYEWAVPWIFAFITFAGSLSANFQSLRHALSHPLPMILALFVLHIFMPLFAWGSGHLIFKGDPLTITGLTLAVVIPTGITSLIWAAMYKGNVGLTLSIILVDTVLSPLIVPLSLSLLAGAQVHMDVWGMMKGLIVMVVIPSFLGMLFNQMSSPERTAFVSSALSPFSKLCLMAVIAINSSAIAPYFKSIDLRFAGIAVTVFFIALTGYAAAWLIGKMMKRRQEEIVSLIFTGGMRNISAGAVLAVTFFPSQVAVPVVIGMLFQQILAALFGYMLNRFELKPMLQKA.

The next 9 helical transmembrane spans lie at 13–33, 53–73, 86–106, 112–132, 147–167, 177–197, 214–234, 246–268, and 272–294; these read VLLS…FAFI, PLPM…FAWG, ITGL…IWAA, VGLT…IVPL, WGMM…GMLF, AFVS…VIAI, AGIA…AWLI, VSLI…VTFF, and VAVP…GYML.

Its subcellular location is the cell membrane. This is an uncharacterized protein from Bacillus subtilis (strain 168).